A 656-amino-acid chain; its full sequence is Heat shock 70 kDa protein, mitochondrial (656 aa).

A mitochondrion-targeting transit peptide spans 1–23 (MFARRLRGAGSLAAASLARWQSS). The interval 624–656 (EYQQAAAGNSSSSSGNTDSSQGEQQQQGDQQKQ) is disordered. A compositionally biased stretch (low complexity) spans 626–656 (QQAAAGNSSSSSGNTDSSQGEQQQQGDQQKQ).

Belongs to the heat shock protein 70 family.

It localises to the mitochondrion matrix. It is found in the kinetoplast. In terms of biological role, may participate in eukaryotic mitochondrial DNA replication. This chain is Heat shock 70 kDa protein, mitochondrial (MTP70), found in Trypanosoma cruzi.